Consider the following 93-residue polypeptide: Large ribosomal subunit protein bL31 (93 aa).

Positions 68–93 are disordered; the sequence is GSADAAADEKKPDAKNNNKDNTSKED. Positions 74 to 93 are enriched in basic and acidic residues; the sequence is ADEKKPDAKNNNKDNTSKED.

It belongs to the bacterial ribosomal protein bL31 family. Type A subfamily. In terms of assembly, part of the 50S ribosomal subunit.

In terms of biological role, binds the 23S rRNA. The chain is Large ribosomal subunit protein bL31 from Prochlorococcus marinus (strain MIT 9313).